Here is a 383-residue protein sequence, read N- to C-terminus: Chaperone protein DnaJ (383 aa).

The 66-residue stretch at 6-71 (DYYEVLGVSK…QKRSQYDQFG (66 aa)) folds into the J domain. A CR-type zinc finger spans residues 141–223 (GVEKKVKVKK…CKGEGVEIGE (83 aa)). Zn(2+)-binding residues include Cys-154, Cys-157, Cys-171, Cys-174, Cys-197, Cys-200, Cys-211, and Cys-214. 4 CXXCXGXG motif repeats span residues 154–161 (CSKCRGDG), 171–178 (CQTCHGTG), 197–204 (CPTCHGEG), and 211–218 (CSKCKGEG).

Belongs to the DnaJ family. In terms of assembly, homodimer. Requires Zn(2+) as cofactor.

Its subcellular location is the cytoplasm. Participates actively in the response to hyperosmotic and heat shock by preventing the aggregation of stress-denatured proteins and by disaggregating proteins, also in an autonomous, DnaK-independent fashion. Unfolded proteins bind initially to DnaJ; upon interaction with the DnaJ-bound protein, DnaK hydrolyzes its bound ATP, resulting in the formation of a stable complex. GrpE releases ADP from DnaK; ATP binding to DnaK triggers the release of the substrate protein, thus completing the reaction cycle. Several rounds of ATP-dependent interactions between DnaJ, DnaK and GrpE are required for fully efficient folding. Also involved, together with DnaK and GrpE, in the DNA replication of plasmids through activation of initiation proteins. This is Chaperone protein DnaJ from Porphyromonas gingivalis (strain ATCC BAA-308 / W83).